Reading from the N-terminus, the 235-residue chain is Small ribosomal subunit protein uS2c (235 aa).

Belongs to the universal ribosomal protein uS2 family.

It is found in the plastid. It localises to the chloroplast. In Adiantum capillus-veneris (Maidenhair fern), this protein is Small ribosomal subunit protein uS2c (rps2).